A 374-amino-acid polypeptide reads, in one-letter code: Glutamate 5-kinase (374 aa).

Lys13 contacts ATP. Ser54, Asp141, and Asn153 together coordinate substrate. 173-174 is a binding site for ATP; the sequence is SD. The region spanning 278-355 is the PUA domain; the sequence is KGTVHLDSGA…NEIESVLGYP (78 aa).

This sequence belongs to the glutamate 5-kinase family.

Its subcellular location is the cytoplasm. The catalysed reaction is L-glutamate + ATP = L-glutamyl 5-phosphate + ADP. Its pathway is amino-acid biosynthesis; L-proline biosynthesis; L-glutamate 5-semialdehyde from L-glutamate: step 1/2. Its function is as follows. Catalyzes the transfer of a phosphate group to glutamate to form L-glutamate 5-phosphate. This is Glutamate 5-kinase from Roseobacter denitrificans (strain ATCC 33942 / OCh 114) (Erythrobacter sp. (strain OCh 114)).